We begin with the raw amino-acid sequence, 402 residues long: Queuine tRNA-ribosyltransferase-like protein (402 aa).

The protein belongs to the queuine tRNA-ribosyltransferase family.

In Theileria annulata, this protein is Queuine tRNA-ribosyltransferase-like protein.